We begin with the raw amino-acid sequence, 872 residues long: Leucine--tRNA ligase (872 aa).

A 'HIGH' region motif is present at residues 42–52; sequence PYPSGKLHMGH. The 'KMSKS' region motif lies at 632 to 636; that stretch reads KMSKS. Lys-635 lines the ATP pocket.

It belongs to the class-I aminoacyl-tRNA synthetase family.

It localises to the cytoplasm. It catalyses the reaction tRNA(Leu) + L-leucine + ATP = L-leucyl-tRNA(Leu) + AMP + diphosphate. This chain is Leucine--tRNA ligase, found in Chromobacterium violaceum (strain ATCC 12472 / DSM 30191 / JCM 1249 / CCUG 213 / NBRC 12614 / NCIMB 9131 / NCTC 9757 / MK).